The chain runs to 333 residues: Ribosomal RNA large subunit methyltransferase F (333 aa).

Basic residues predominate over residues 1-10 (MPQPPKRPRK). The disordered stretch occupies residues 1–31 (MPQPPKRPRKPAPAAVKTAPAKGELHPRNRH). Residues 12-22 (APAAVKTAPAK) show a composition bias toward low complexity.

Belongs to the methyltransferase superfamily. METTL16/RlmF family.

It localises to the cytoplasm. The catalysed reaction is adenosine(1618) in 23S rRNA + S-adenosyl-L-methionine = N(6)-methyladenosine(1618) in 23S rRNA + S-adenosyl-L-homocysteine + H(+). Its function is as follows. Specifically methylates the adenine in position 1618 of 23S rRNA. The polypeptide is Ribosomal RNA large subunit methyltransferase F (Ectopseudomonas mendocina (strain ymp) (Pseudomonas mendocina)).